A 779-amino-acid chain; its full sequence is Ribonucleoside-diphosphate reductase large subunit (779 aa).

Substrate is bound by residues S178, 193–194, G222, 420–424, and 614–618; these read SC, NLCIE, and PTATS. Residues C194 and C440 are joined by a disulfide bond. N420 acts as the Proton acceptor in catalysis. C422 acts as the Cysteine radical intermediate in catalysis. The active-site Proton acceptor is the E424.

The protein belongs to the ribonucleoside diphosphate reductase large chain family. In terms of assembly, heterotetramer composed of a homodimer of the large subunit (R1) and a homodimer of the small subunit (R2). Larger multisubunit protein complex are also active, composed of (R1)n(R2)n.

It carries out the reaction a 2'-deoxyribonucleoside 5'-diphosphate + [thioredoxin]-disulfide + H2O = a ribonucleoside 5'-diphosphate + [thioredoxin]-dithiol. Its activity is regulated as follows. Under complex allosteric control mediated by deoxynucleoside triphosphates and ATP binding. The type of nucleotide bound at the specificity site determines substrate preference. It seems probable that ATP makes the enzyme reduce CDP and UDP, dGTP favors ADP reduction and dTTP favors GDP reduction. Its function is as follows. Ribonucleoside-diphosphate reductase holoenzyme provides the precursors necessary for viral DNA synthesis. Allows virus growth in non-dividing cells. Catalyzes the biosynthesis of deoxyribonucleotides from the corresponding ribonucleotides. The protein is Ribonucleoside-diphosphate reductase large subunit of Ornithodoros (relapsing fever ticks).